The sequence spans 469 residues: Aspartyl/glutamyl-tRNA(Asn/Gln) amidotransferase subunit B (469 aa).

The protein belongs to the GatB/GatE family. GatB subfamily. As to quaternary structure, heterotrimer of A, B and C subunits.

The catalysed reaction is L-glutamyl-tRNA(Gln) + L-glutamine + ATP + H2O = L-glutaminyl-tRNA(Gln) + L-glutamate + ADP + phosphate + H(+). The enzyme catalyses L-aspartyl-tRNA(Asn) + L-glutamine + ATP + H2O = L-asparaginyl-tRNA(Asn) + L-glutamate + ADP + phosphate + 2 H(+). Allows the formation of correctly charged Asn-tRNA(Asn) or Gln-tRNA(Gln) through the transamidation of misacylated Asp-tRNA(Asn) or Glu-tRNA(Gln) in organisms which lack either or both of asparaginyl-tRNA or glutaminyl-tRNA synthetases. The reaction takes place in the presence of glutamine and ATP through an activated phospho-Asp-tRNA(Asn) or phospho-Glu-tRNA(Gln). The polypeptide is Aspartyl/glutamyl-tRNA(Asn/Gln) amidotransferase subunit B (Methanococcus maripaludis (strain C7 / ATCC BAA-1331)).